A 172-amino-acid polypeptide reads, in one-letter code: GTP-dependent dephospho-CoA kinase (172 aa).

The GTP site is built by aspartate 49, valine 50, valine 51, aspartate 68, lysine 70, and glutamate 120.

This sequence belongs to the GTP-dependent DPCK family.

It carries out the reaction 3'-dephospho-CoA + GTP = GDP + CoA + H(+). It functions in the pathway cofactor biosynthesis; coenzyme A biosynthesis. Functionally, catalyzes the GTP-dependent phosphorylation of the 3'-hydroxyl group of dephosphocoenzyme A to form coenzyme A (CoA). The chain is GTP-dependent dephospho-CoA kinase from Pyrobaculum arsenaticum (strain DSM 13514 / JCM 11321 / PZ6).